We begin with the raw amino-acid sequence, 222 residues long: MRRAVVLLSGGLDSTTCLSVALAEGYEVYPLSFDYGQRNRKELESAKQVVKYFKLKEHKIVKIGNVGGSALTDMNIDVPDYKGLPTIPVTYVPARNIIFLSYAVGYAEVVDAEAIFIGVNAVDYSGYPDCRPEFIEAFQKAINLGTKSGVNGKPVKIITPLINLSKAEIIKLACENNAPLHLTTTCYRGGEKACGVCDSCVLRLKGFKEAGIVDTIEYMERT.

ATP is bound at residue 8–18 (LSGGLDSTTCL). Zn(2+) contacts are provided by Cys-186, Cys-194, Cys-197, and Cys-200.

The protein belongs to the QueC family. Homodimer. Zn(2+) is required as a cofactor.

The enzyme catalyses 7-carboxy-7-deazaguanine + NH4(+) + ATP = 7-cyano-7-deazaguanine + ADP + phosphate + H2O + H(+). It functions in the pathway purine metabolism; 7-cyano-7-deazaguanine biosynthesis. In terms of biological role, catalyzes the ATP-dependent conversion of 7-carboxy-7-deazaguanine (CDG) to 7-cyano-7-deazaguanine (preQ(0)). This is 7-cyano-7-deazaguanine synthase from Acetivibrio thermocellus (strain ATCC 27405 / DSM 1237 / JCM 9322 / NBRC 103400 / NCIMB 10682 / NRRL B-4536 / VPI 7372) (Clostridium thermocellum).